Reading from the N-terminus, the 353-residue chain is Protein disulfide isomerase CRELD2 (353 aa).

Positions 1–24 (MRLPRRAALGLLPLLLLLPPAPEA) are cleaved as a signal peptide. The short motif at 31–34 (CHRC) is the CXXC element. 4 disulfide bridges follow: cysteine 31/cysteine 34, cysteine 140/cysteine 154, cysteine 148/cysteine 166, and cysteine 168/cysteine 177. An EGF-like 1 domain is found at 136 to 178 (DCLACQGGSQRPCSGNGHCSGDGSRQGDGSCRCHMGYQGPLCT). An FU 1 repeat occupies 193–240 (HSICTACDESCKTCSGLTNRDCGECEVGWVLDEGACVDVDECAAEPPP). An N-linked (GlcNAc...) asparagine glycan is attached at asparagine 251. The FU 2 repeat unit spans residues 253 to 302 (SYTCEECDSSCVGCTGEGPGNCKECISGYAREHGQCADVDECSLAEKTCV). The CXXC motif lies at 263–266 (CVGC). Cystine bridges form between cysteine 263/cysteine 266, cysteine 294/cysteine 308, cysteine 301/cysteine 317, and cysteine 319/cysteine 330. An EGF-like 2; calcium-binding domain is found at 290–331 (DVDECSLAEKTCVRKNENCYNTPGSYVCVCPDGFEETEDACV). The disordered stretch occupies residues 332-353 (PPAEAEATEGESPTQLPSREDL). The segment covering 342–353 (ESPTQLPSREDL) has biased composition (polar residues).

This sequence belongs to the CRELD family. As to quaternary structure, interacts with CHRNA4. Component of a complex containing at least CRELD2, MANF, MATN3 and PDIA4. As to expression, ubiquitously expressed. Highly expressed in skeletal muscle, heart, liver, kidney and placenta.

It is found in the endoplasmic reticulum. It catalyses the reaction Catalyzes the rearrangement of -S-S- bonds in proteins.. Protein disulfide isomerase. Might play a role in the unfolded protein response. May regulate transport of alpha4-beta2 neuronal acetylcholine receptor. This is Protein disulfide isomerase CRELD2 (CRELD2) from Homo sapiens (Human).